The chain runs to 269 residues: Lck-interacting transmembrane adapter 1 (269 aa).

Topologically, residues 1 to 7 (MRPPVPS) are extracellular. Residues 8-28 (APLALWVLGCFSLLLWLWALC) traverse the membrane as a helical; Signal-anchor for type III membrane protein segment. 2 S-palmitoyl cysteine lipidation sites follow: Cys28 and Cys31. Topologically, residues 29-269 (TACHRKRAQR…VYESIKEMGL (241 aa)) are cytoplasmic. Residues 102 to 133 (STRSQVPNSAFPPRQLPRAPPAAPATAPSTSS) form a disordered region. Over residues 115 to 124 (RQLPRAPPAA) the composition is skewed to pro residues. 3 positions are modified to phosphotyrosine: Tyr137, Tyr175, and Tyr207. The interaction with GRB2 stretch occupies residues 137–140 (YSNV). Interaction with CSK regions lie at residues 175-178 (YACI) and 207-210 (YSRV). Phosphotyrosine; by LYN or LCK is present on residues Tyr242 and Tyr261. An interaction with LCK and PIK3R1 region spans residues 242 to 245 (YEAI). The interaction with LCK, PLCG2 and PIK3R1 stretch occupies residues 261 to 264 (YESI). At Ser263 the chain carries Phosphoserine.

As to quaternary structure, when phosphorylated in response to TCR stimulation and/or CD4 costimulation, interacts with LCK, CSK, FYN, PTPN11/SHP2, GRB2, PIK3R1 and GRAP2. When phosphorylated in response to BCR activation, interacts with LYN, PIK3R1, PLCG2 and GRB2. In terms of processing, palmitoylation of Cys-28 and Cys-31 is required for raft targeting. Phosphorylated on tyrosines upon TCR activation and/or CD4 coreceptor stimulation, or upon BCR stimulation; which leads to the recruitment of SH2-containing proteins. In terms of tissue distribution, expressed in spleen and lung. Present in primary B-cells and peripheral T-cells (at protein level).

The protein resides in the cell membrane. Involved in BCR (B-cell antigen receptor)-mediated signaling in B-cells and TCR (T-cell antigen receptor)-mediated T-cell signaling in T-cells. In absence of TCR signaling, may be involved in CD4-mediated inhibition of T-cell activation. Couples activation of these receptors and their associated kinases with distal intracellular events such as calcium mobilization or MAPK activation through the recruitment of PLCG2, GRB2, GRAP2, and other signaling molecules. In Mus musculus (Mouse), this protein is Lck-interacting transmembrane adapter 1 (Lime1).